The sequence spans 2261 residues: Phospholipid-transporting ATPase ABCA1 (2261 aa).

A lipid anchor (S-palmitoyl cysteine) is attached at C3. N14 is a glycosylation site (N-linked (GlcNAc...) asparagine). The chain crosses the membrane as a helical span at residues 22–42; the sequence is TCQLLLEVAWPLFIFLILISV. C23 is lipidated: S-palmitoyl cysteine. The Extracellular segment spans residues 43–639; the sequence is RLSYPPYEQH…DIFLRVMSRS (597 aa). Positions 69–80 are annulus domain 1; that stretch reads WVQGIICNANNP. C75 and C309 are joined by a disulfide. N98, N151, N161, N196, N244, N292, N337, and N349 each carry an N-linked (GlcNAc...) asparagine glycan. The tract at residues 368-379 is annulus domain 2; that stretch reads SRIIWKALKPLL. N400, N478, N489, and N521 each carry an N-linked (GlcNAc...) asparagine glycan. Residues 564 to 594 form a gateway domain region; it reads ERTNKIKDGYWDPGPRADPFEDMRYVWGGFA. A run of 5 helical transmembrane segments spans residues 640-660, 683-703, 716-736, 745-765, and 777-797; these read MPLF…KGIV, FSWF…LVVI, SVVF…CFLI, LAAA…VLCV, and IFAS…FALF. N-linked (GlcNAc...) asparagine glycosylation occurs at N820. A helical transmembrane segment spans residues 827 to 847; that stretch reads MMLFDTFLYGVMTWYIEAVFP. An ABC transporter 1 domain is found at 899 to 1131; sequence VSIQNLVKVY…LGTGYYLTLV (233 aa). Position 933–940 (933–940) interacts with ATP; it reads GHNGAGKT. A helical membrane pass occupies residues 1041-1057; the sequence is LSVALAFVGGSKVVILD. At S1042 the chain carries Phosphoserine; by PKA. Residues C1110 and C1111 are each lipidated (S-palmitoyl cysteine). N-linked (GlcNAc...) asparagine glycans are attached at residues N1144 and N1294. A disordered region spans residues 1283–1312; that stretch reads RPFTEDDAADPNDSDIDPESRETDLLSGMD. Positions 1287–1299 are enriched in acidic residues; the sequence is EDDAADPNDSDID. Position 1296 is a phosphoserine (S1296). Residues 1351-1371 form a helical membrane-spanning segment; sequence IVLPAVFVCIALVFSLIVPPF. Topologically, residues 1372–1656 are extracellular; sequence GKYPSLELQP…ALMTTSVDVL (285 aa). The N-linked (GlcNAc...) asparagine glycan is linked to N1453. Cysteines 1463 and 1477 form a disulfide. 2 N-linked (GlcNAc...) asparagine glycosylation sites follow: N1504 and N1637. 6 consecutive transmembrane segments (helical) span residues 1657–1677, 1703–1723, 1735–1755, 1768–1788, 1802–1822, and 1852–1872; these read VSIC…VFLI, FVWD…IFIC, LPVL…LMYP, VVLT…TFVL, ILKS…LIDM, and NLFA…LIQY. An ABC transporter 2 domain is found at 1912–2144; that stretch reads LEIKELTKIY…FGDGYTIVVR (233 aa). 1946-1953 contacts ATP; sequence GVNGAGKS. N2044 carries N-linked (GlcNAc...) asparagine glycosylation. S2054 is modified (phosphoserine; by PKA). N2238 carries N-linked (GlcNAc...) asparagine glycosylation.

This sequence belongs to the ABC transporter superfamily. ABCA family. As to quaternary structure, interacts with MEGF10. May interact with APOE1; functionally associated with APOE1 in the biogenesis of HDLs. Interacts with ABCA8; this interaction potentiates cholesterol efflux. Interacts with ABCA12 and NR1H2; this interaction is required for ABCA1 localization to the cell surface and is necessary for its normal activity and stability. Phosphorylation on Ser-2054 regulates phospholipid efflux. Post-translationally, palmitoylated by ZDHHC8. Palmitoylation is essential for localization to the plasma membrane. Widely expressed, but most abundant in macrophages.

It localises to the cell membrane. The protein resides in the endosome. The enzyme catalyses ATP + H2O + phospholipidSide 1 = ADP + phosphate + phospholipidSide 2.. It carries out the reaction a 1,2-diacyl-sn-glycero-3-phosphocholine(out) + ATP + H2O = a 1,2-diacyl-sn-glycero-3-phosphocholine(in) + ADP + phosphate + H(+). It catalyses the reaction a 1,2-diacyl-sn-glycero-3-phospho-L-serine(out) + ATP + H2O = a 1,2-diacyl-sn-glycero-3-phospho-L-serine(in) + ADP + phosphate + H(+). The catalysed reaction is a sphingomyelin(in) + ATP + H2O = a sphingomyelin(out) + ADP + phosphate + H(+). The enzyme catalyses cholesterol(in) + ATP + H2O = cholesterol(out) + ADP + phosphate + H(+). ATPase activity is decreased by cholesterol and ceramide. ATPase activity is stimulated by phosphatidylcholine and to a lesser degree by phosphatidylserine and sphingomyelin. Phospholipid translocase activity is highly reduced by berylium fluoride and aluminum flouride and reduced by N-ethylmaleimide. Its function is as follows. Catalyzes the translocation of specific phospholipids from the cytoplasmic to the extracellular/lumenal leaflet of membrane coupled to the hydrolysis of ATP. Thereby, participates in phospholipid transfer to apolipoproteins to form nascent high density lipoproteins/HDLs. Transports preferentially phosphatidylcholine over phosphatidylserine. May play a similar role in the efflux of intracellular cholesterol to apolipoproteins and the formation of nascent high density lipoproteins/HDLs. Translocates phospholipids from the outer face of the plasma membrane and forces it through its gateway and annulus into an elongated hydrophobic tunnel in its extracellular domain. The chain is Phospholipid-transporting ATPase ABCA1 from Homo sapiens (Human).